Consider the following 172-residue polypeptide: 3-hydroxydecanoyl-[acyl-carrier-protein] dehydratase (172 aa).

Residue His71 is part of the active site.

Belongs to the thioester dehydratase family. FabA subfamily. Homodimer.

The protein localises to the cytoplasm. It carries out the reaction a (3R)-hydroxyacyl-[ACP] = a (2E)-enoyl-[ACP] + H2O. The enzyme catalyses (3R)-hydroxydecanoyl-[ACP] = (2E)-decenoyl-[ACP] + H2O. It catalyses the reaction (2E)-decenoyl-[ACP] = (3Z)-decenoyl-[ACP]. It functions in the pathway lipid metabolism; fatty acid biosynthesis. Its function is as follows. Necessary for the introduction of cis unsaturation into fatty acids. Catalyzes the dehydration of (3R)-3-hydroxydecanoyl-ACP to E-(2)-decenoyl-ACP and then its isomerization to Z-(3)-decenoyl-ACP. Can catalyze the dehydratase reaction for beta-hydroxyacyl-ACPs with saturated chain lengths up to 16:0, being most active on intermediate chain length. The protein is 3-hydroxydecanoyl-[acyl-carrier-protein] dehydratase of Escherichia coli O6:K15:H31 (strain 536 / UPEC).